Reading from the N-terminus, the 150-residue chain is Transcriptional regulator MraZ (150 aa).

2 consecutive SpoVT-AbrB domains span residues 5–51 and 80–123; these read VANL…PQPE and ATEC…DEDT.

It belongs to the MraZ family. In terms of assembly, forms oligomers.

Its subcellular location is the cytoplasm. The protein resides in the nucleoid. In Thioalkalivibrio sulfidiphilus (strain HL-EbGR7), this protein is Transcriptional regulator MraZ.